The following is a 575-amino-acid chain: DNA mismatch repair protein MutL (575 aa).

Belongs to the DNA mismatch repair MutL/HexB family.

Functionally, this protein is involved in the repair of mismatches in DNA. It is required for dam-dependent methyl-directed DNA mismatch repair. May act as a 'molecular matchmaker', a protein that promotes the formation of a stable complex between two or more DNA-binding proteins in an ATP-dependent manner without itself being part of a final effector complex. This chain is DNA mismatch repair protein MutL, found in Coxiella burnetii (strain CbuG_Q212) (Coxiella burnetii (strain Q212)).